Here is a 91-residue protein sequence, read N- to C-terminus: UPF0298 protein spyM18_0447 (91 aa).

It belongs to the UPF0298 family.

Its subcellular location is the cytoplasm. This chain is UPF0298 protein spyM18_0447, found in Streptococcus pyogenes serotype M18 (strain MGAS8232).